The sequence spans 865 residues: DNA topoisomerase 1 (865 aa).

The Toprim domain maps to 3–142 (KALVIVESPA…RYSRVVFNEI (140 aa)). Position 9 (Glu-9) interacts with Mg(2+). The segment at 37 to 65 (LPTSGSAAKKSADSTSTKTAKKPKKDERG) is disordered. A compositionally biased stretch (low complexity) spans 39–54 (TSGSAAKKSADSTSTK). Asp-111 provides a ligand contact to Mg(2+). In terms of domain architecture, Topo IA-type catalytic spans 158-575 (NINRVNAQQA…NFFSDFTQQL (418 aa)). Residues 192 to 197 (SAGRVQ) are interaction with DNA. The active-site O-(5'-phospho-DNA)-tyrosine intermediate is Tyr-319. 3 consecutive C4-type zinc fingers follow at residues 599–630 (CPTC…KERC), 662–689 (CQKC…NPTC), and 711–736 (CEKC…NDEC).

This sequence belongs to the type IA topoisomerase family. As to quaternary structure, monomer. Mg(2+) serves as cofactor.

The enzyme catalyses ATP-independent breakage of single-stranded DNA, followed by passage and rejoining.. Functionally, releases the supercoiling and torsional tension of DNA, which is introduced during the DNA replication and transcription, by transiently cleaving and rejoining one strand of the DNA duplex. Introduces a single-strand break via transesterification at a target site in duplex DNA. The scissile phosphodiester is attacked by the catalytic tyrosine of the enzyme, resulting in the formation of a DNA-(5'-phosphotyrosyl)-enzyme intermediate and the expulsion of a 3'-OH DNA strand. The free DNA strand then undergoes passage around the unbroken strand, thus removing DNA supercoils. Finally, in the religation step, the DNA 3'-OH attacks the covalent intermediate to expel the active-site tyrosine and restore the DNA phosphodiester backbone. The protein is DNA topoisomerase 1 of Salmonella typhimurium (strain LT2 / SGSC1412 / ATCC 700720).